Consider the following 524-residue polypeptide: MGNFYRKNIEILGQQRFLYPLLFQDEFYAIAQNLFSNPRASVEVREEICKNCNSFSFFTVKRLIFKIRKRNVFLESKNKNSISLALIAEGLTLGLDVFFSAQWKRFVDGEGGTEQLSFQSIHSIFAYLDETTPYSFSSLGIRIPSYVHPELFIRMFNCLCWIDDVCFLHLLSSMLCFLKHLTILDKFIFFNSKGFIRLVLFLWNIFVSKGESSKISLWKQKCYRAKFKSFGSFAEQTHFHRKMKLKNPKIKAHEKFSEVFFFSHYSRFGEKSVLIGTPILIKKYRYFFCHFWQTSFFFSETYGLFVHEFSRKNISLIGYSFYFQNHRTFFRIKMFYDFFFTELVNNEFHPKFGIISIMKFLSIEGFCDIMGRPISKLSWTCFTDDDIFDKCDRFWKILYYYYCGAKNKAYLDRIKYILLLSCFKTIAFKHKSTIRVVRKEFDFELRKKFFPKEIEFERDFLCSRFAQKFKKWLLKINLATERFWLLNILKVHFLTKSWHKDQDALDFCLIVEKNNILPMLNNFL.

This sequence belongs to the intron maturase 2 family. MatK subfamily.

Its subcellular location is the plastid. It is found in the chloroplast. Usually encoded in the trnK tRNA gene intron. Probably assists in splicing its own and other chloroplast group II introns. This is Maturase K from Welwitschia mirabilis (Tree tumbo).